We begin with the raw amino-acid sequence, 208 residues long: Small ribosomal subunit protein uS4 (208 aa).

In terms of domain architecture, S4 RNA-binding spans 98–161 (TRLDNTVYRL…RKIPVIAEAQ (64 aa)).

It belongs to the universal ribosomal protein uS4 family. As to quaternary structure, part of the 30S ribosomal subunit. Contacts protein S5. The interaction surface between S4 and S5 is involved in control of translational fidelity.

One of the primary rRNA binding proteins, it binds directly to 16S rRNA where it nucleates assembly of the body of the 30S subunit. Functionally, with S5 and S12 plays an important role in translational accuracy. This chain is Small ribosomal subunit protein uS4, found in Maridesulfovibrio salexigens (strain ATCC 14822 / DSM 2638 / NCIMB 8403 / VKM B-1763) (Desulfovibrio salexigens).